The chain runs to 295 residues: Ankyrin repeat and SOCS box protein 17 (295 aa).

An ANK repeat occupies 146 to 176 (SGITPLFYVAQTRQSNIFKILLQYGILEREK). Residues 232-295 (LGRRPIISNW…RLQNYLNLEI (64 aa)) enclose the SOCS box domain.

The protein belongs to the ankyrin SOCS box (ASB) family.

The protein operates within protein modification; protein ubiquitination. May be a substrate-recognition component of a SCF-like ECS (Elongin-Cullin-SOCS-box protein) E3 ubiquitin-protein ligase complex which mediates the ubiquitination and subsequent proteasomal degradation of target proteins. The chain is Ankyrin repeat and SOCS box protein 17 (ASB17) from Macaca fascicularis (Crab-eating macaque).